The primary structure comprises 389 residues: Glutamate 5-kinase (389 aa).

Lys-17 provides a ligand contact to ATP. The substrate site is built by Ser-57, Asp-144, and Asn-156. Position 176–177 (176–177) interacts with ATP; the sequence is SD. Residues 282 to 359 form the PUA domain; that stretch reads AGEIHVDAGA…NEIETILGYV (78 aa).

This sequence belongs to the glutamate 5-kinase family.

Its subcellular location is the cytoplasm. It catalyses the reaction L-glutamate + ATP = L-glutamyl 5-phosphate + ADP. It participates in amino-acid biosynthesis; L-proline biosynthesis; L-glutamate 5-semialdehyde from L-glutamate: step 1/2. Its function is as follows. Catalyzes the transfer of a phosphate group to glutamate to form L-glutamate 5-phosphate. The protein is Glutamate 5-kinase of Agrobacterium fabrum (strain C58 / ATCC 33970) (Agrobacterium tumefaciens (strain C58)).